Reading from the N-terminus, the 94-residue chain is Pyrimidine/purine nucleoside phosphorylase (94 aa).

The protein belongs to the nucleoside phosphorylase PpnP family.

The enzyme catalyses a purine D-ribonucleoside + phosphate = a purine nucleobase + alpha-D-ribose 1-phosphate. The catalysed reaction is adenosine + phosphate = alpha-D-ribose 1-phosphate + adenine. It carries out the reaction cytidine + phosphate = cytosine + alpha-D-ribose 1-phosphate. It catalyses the reaction guanosine + phosphate = alpha-D-ribose 1-phosphate + guanine. The enzyme catalyses inosine + phosphate = alpha-D-ribose 1-phosphate + hypoxanthine. The catalysed reaction is thymidine + phosphate = 2-deoxy-alpha-D-ribose 1-phosphate + thymine. It carries out the reaction uridine + phosphate = alpha-D-ribose 1-phosphate + uracil. It catalyses the reaction xanthosine + phosphate = alpha-D-ribose 1-phosphate + xanthine. Catalyzes the phosphorolysis of diverse nucleosides, yielding D-ribose 1-phosphate and the respective free bases. Can use uridine, adenosine, guanosine, cytidine, thymidine, inosine and xanthosine as substrates. Also catalyzes the reverse reactions. This Salmonella paratyphi C (strain RKS4594) protein is Pyrimidine/purine nucleoside phosphorylase.